The sequence spans 323 residues: C-type lectin domain family 11 member A (323 aa).

An N-terminal signal peptide occupies residues 1 to 21 (MQAAWLLGALVVPQLLGFGHG). Disordered stretches follow at residues 55 to 106 (LGLP…TPED) and 272 to 295 (LGAQPSASPHPLSPDQPNGGTLEN). A Cell attachment site motif is present at residues 61 to 63 (RGD). Acidic residues predominate over residues 74–90 (EDWEMEEDQGEEEEEEA). Residues 183–320 (LGHKCFLLSR…CQRRLYYVCE (138 aa)) enclose the C-type lectin domain. Cystine bridges form between C204/C319 and C296/C311.

In terms of processing, O-glycosylated. Probably sulfated on the O-glycans. As to expression, expressed in skeletal tissues including bone marrow, chondrocytes, primary ossification center-associated cells, the perichondrium and periosteum. Lower levels of expression were detected in spleen, thymus, appendix and fetal liver.

Its subcellular location is the cytoplasm. The protein localises to the secreted. Its function is as follows. Promotes osteogenesis by stimulating the differentiation of mesenchymal progenitors into mature osteoblasts. Important for repair and maintenance of adult bone. This Homo sapiens (Human) protein is C-type lectin domain family 11 member A (CLEC11A).